The following is a 1040-amino-acid chain: Multidrug resistance protein MdtB (1040 aa).

12 consecutive transmembrane segments (helical) span residues 16–36 (FIMR…AGII), 347–367 (LMMA…NIPA), 369–389 (IIPG…MVFL), 396–416 (LTLM…IVVI), 440–460 (IGFT…PLLF), 472–492 (FAIT…TLTP), 537–557 (WLTL…WVFI), 863–883 (LGST…VLGI), 888–908 (FIHP…ALLA), 911–931 (IAGS…IGIV), 968–988 (ILMT…STGV), and 998–1018 (IGMV…TPVI).

The protein belongs to the resistance-nodulation-cell division (RND) (TC 2.A.6) family. MdtB subfamily. As to quaternary structure, part of a tripartite efflux system composed of MdtA, MdtB and MdtC. MdtB forms a heteromultimer with MdtC.

It localises to the cell inner membrane. In terms of biological role, the MdtABC tripartite complex confers resistance against novobiocin and deoxycholate. This is Multidrug resistance protein MdtB from Escherichia coli (strain 55989 / EAEC).